Consider the following 1224-residue polypeptide: ATP-dependent helicase/deoxyribonuclease subunit B (1224 aa).

In terms of domain architecture, UvrD-like helicase ATP-binding spans 1–326; sequence MSLRFILGRA…VCAAANRRSE (326 aa). 8-15 is an ATP binding site; that stretch reads GRAGTGKS. Residues 283–584 enclose the UvrD-like helicase C-terminal domain; the sequence is QSAPRFQHPE…KLSLIPPELD (302 aa). [4Fe-4S] cluster-binding residues include C841, C1176, C1179, and C1185.

It belongs to the helicase family. AddB/RexB type 1 subfamily. As to quaternary structure, heterodimer of AddA and AddB. The cofactor is Mg(2+). [4Fe-4S] cluster is required as a cofactor.

Functionally, the heterodimer acts as both an ATP-dependent DNA helicase and an ATP-dependent, dual-direction single-stranded exonuclease. Recognizes the chi site generating a DNA molecule suitable for the initiation of homologous recombination. The AddB subunit has 5' -&gt; 3' nuclease activity but not helicase activity. This chain is ATP-dependent helicase/deoxyribonuclease subunit B, found in Heliobacterium modesticaldum (strain ATCC 51547 / Ice1).